The primary structure comprises 868 residues: MASLDNLVARYQRCFNDQSLKNSTIELEIRFQQINFLLFKTVYEALVAQEIPSTISHSIRCIKKVHHENHCREKILPSENLYFKKQPLMFFKFSEPASLGCKVSLAIEQPIRKFILDSSVLVRLKNRTTFRVSELWKIELTIVKQLMGSEVSAKLAAFKTLLFDTPEQQTTKNMMTLINPDDEYLYEIEIEYTGKPESLTAADVIKIKNTVLTLISPNHLMLTAYHQAIEFIASHILSSEILLARIKSGKWGLKRLLPQVKSMTKADYMKFYPPVGYYVTDKADGIRGIAVIQDTQIYVVADQLYSLGTTGIEPLKPTILDGEFMPEKKEFYGFDVIMYEGNLLTQQGFETRIESLSKGIKVLQAFNIKAEMKPFISLTSADPNVLLKNFESIFKKKTRPYSIDGIILVEPGNSYLNTNTFKWKPTWDNTLDFLVRKCPESLNVPEYAPKKGFSLHLLFVGISGELFKKLALNWCPGYTKLFPVTQRNQNYFPVQFQPSDFPLAFLYYHPDTSSFSNIDGKVLEMRCLKREINYVRWEIVKIREDRQQDLKTGGYFGNDFKTAELTWLNYMDPFSFEELAKGPSGMYFAGAKTGIYRAQTALISFIKQEIIQKISHQSWVIDLGIGKGQDLGRYLDAGVRHLVGIDKDQTALAELVYRKFSHATTRQHKHATNIYVLHQDLAEPAKEISEKVHQIYGFPKEGASSIVSNLFIHYLMKNTQQVENLAVLCHKLLQPGGMVWFTTMLGEQVLELLHENRIELNEVWEARENEVVKFAIKRLFKEDILQETGQEIGVLLPFSNGDFYNEYLVNTAFLIKIFKHHGFSLVQKQSFKDWIPEFQNFSKSLYKILTEADKTWTSLFGFICLRKN.

Lysine 282 acts as the N6-GMP-lysine intermediate in catalysis. Residues glycine 594 to asparagine 868 form the mRNA cap 0 methyltransferase domain. S-adenosyl-L-methionine contacts are provided by residues lysine 607, glycine 624, aspartate 646, and leucine 710–isoleucine 712.

This sequence in the N-terminal section; belongs to the dsDNA virus mRNA guanylyltransferase family. In the C-terminal section; belongs to the class I-like SAM-binding methyltransferase superfamily. mRNA cap 0 methyltransferase family. As to quaternary structure, part of the viral DNA-directed RNA polymerase that consists of 8 polII-like subunits (RPB1, RPB2, RPB3, RPB5, RPB6, RPB7, RPB9, RPB10), a capping enzyme and a termination factor.

The protein localises to the virion. The enzyme catalyses a 5'-end triphospho-ribonucleoside in mRNA + H2O = a 5'-end diphospho-ribonucleoside in mRNA + phosphate + H(+). It catalyses the reaction a 5'-end diphospho-ribonucleoside in mRNA + GTP + H(+) = a 5'-end (5'-triphosphoguanosine)-ribonucleoside in mRNA + diphosphate. The catalysed reaction is a 5'-end (5'-triphosphoguanosine)-ribonucleoside in mRNA + S-adenosyl-L-methionine = a 5'-end (N(7)-methyl 5'-triphosphoguanosine)-ribonucleoside in mRNA + S-adenosyl-L-homocysteine. It functions in the pathway mRNA processing; mRNA capping. Functionally, probably catalyzes the second reaction in the mRNA cap formation pathway. Forms a covalent complex with GTP. This Ornithodoros (relapsing fever ticks) protein is mRNA-capping enzyme.